We begin with the raw amino-acid sequence, 494 residues long: Pre-hexon-linking protein IIIa (494 aa).

The interval 1–101 (MAALSPTVRA…ALLQRVGRYN (101 aa)) is peripentonal hexon-tethering domain. A binding to hexon-linking protein region spans residues 132 to 245 (GSLVALNGFL…FTDSRTVNGD (114 aa)). Phosphothreonine; by host is present on threonine 268. Serine 439 and serine 456 each carry phosphoserine; by host. A propeptide spanning residues 484–494 (TNPFKHLQPQF) is cleaved from the precursor.

Belongs to the adenoviridae hexon-linking protein IIIa family. Interacts with hexon proteins; this interaction tethers the peripentonal hexons to hexons situated in the facet. Interacts with the penton protein (via N-terminus). Interacts with packaging protein 3; this interaction is required to promote correct genome packaging. Post-translationally, cleaved near the C-terminus by the viral protease during virion maturation to form the mature protein.

The protein localises to the virion. Its subcellular location is the host nucleus. Structural component of the virion that acts as a cement protein on the capsid exterior which mediates the interactions between the hexons, including the peripentonal hexons, and reaches all the way to the penton vertices. Two hexon linking proteins IIIa, one from each facet, stabilize the unique edge interface between a pair of facets. As the virus enters the host cell, hexon linking proteins IIIa are shed concomitant with virion acidification in the endosome. During virus assembly, seems to play a role in the serotype specificity of the packaging of viral DNA via its interaction with packaging protein 3. In Murine adenovirus A serotype 1 (MAdV-1), this protein is Pre-hexon-linking protein IIIa.